We begin with the raw amino-acid sequence, 392 residues long: Flavohemoprotein (392 aa).

The region spanning 1–139 (MLNAEQRAII…LADILIGAEE (139 aa)) is the Globin domain. H85 lines the heme b pocket. Residues Y95 and E138 each act as charge relay system in the active site. Residues 150-392 (GGWRGTREFR…EFFGPAAALE (243 aa)) form a reductase region. The FAD-binding FR-type domain occupies 153–256 (RGTREFRLVR…FPPAGDFTLA (104 aa)). FAD-binding positions include Y191 and 205–208 (RNYS). 268–273 (GVGITP) is a binding site for NADP(+). Position 384–387 (384–387 (FFGP)) interacts with FAD.

It belongs to the globin family. Two-domain flavohemoproteins subfamily. In the C-terminal section; belongs to the flavoprotein pyridine nucleotide cytochrome reductase family. The cofactor is heme b. FAD is required as a cofactor.

It carries out the reaction 2 nitric oxide + NADPH + 2 O2 = 2 nitrate + NADP(+) + H(+). It catalyses the reaction 2 nitric oxide + NADH + 2 O2 = 2 nitrate + NAD(+) + H(+). Its function is as follows. Is involved in NO detoxification in an aerobic process, termed nitric oxide dioxygenase (NOD) reaction that utilizes O(2) and NAD(P)H to convert NO to nitrate, which protects the bacterium from various noxious nitrogen compounds. Therefore, plays a central role in the inducible response to nitrosative stress. The chain is Flavohemoprotein from Pseudomonas putida (strain ATCC 47054 / DSM 6125 / CFBP 8728 / NCIMB 11950 / KT2440).